The following is a 274-amino-acid chain: Large ribosomal subunit protein uL2 (274 aa).

Residues 220–259 form a disordered region; sequence VRGAAMNPRDHPHGGGEGRAPRGMSTPKTKWGKPARGVKT. Residues 227 to 239 show a composition bias toward basic and acidic residues; the sequence is PRDHPHGGGEGRA. Residues 249–259 are compositionally biased toward basic residues; it reads KWGKPARGVKT.

The protein belongs to the universal ribosomal protein uL2 family. Part of the 50S ribosomal subunit. Forms a bridge to the 30S subunit in the 70S ribosome.

Its function is as follows. One of the primary rRNA binding proteins. Required for association of the 30S and 50S subunits to form the 70S ribosome, for tRNA binding and peptide bond formation. It has been suggested to have peptidyltransferase activity; this is somewhat controversial. Makes several contacts with the 16S rRNA in the 70S ribosome. The protein is Large ribosomal subunit protein uL2 of Chloroflexus aggregans (strain MD-66 / DSM 9485).